The following is a 499-amino-acid chain: MSKAHVIGLGKSGVAAARLLKREGWEVELSDGNTSKTLLQQQQELAAEQITVKLGQSLELNGDNLPQLIVVSPGVPWDIPVLIKARQLGIETIGEMELAWRNLRWRSQPQASLPWVGITGTNGKTTTTALIAAIFQAAELDAPACGNIGYAACEVALSWSGRGAGGREQGAGGDREVNSSSSPSLDWVIAEVSSYQIESSSSLAPRIGVWTTFTPDHLSRHKTLENYYNIKAKLLRQSELQVFNGDDAYLSQLGLSAWPNAYWTSVKGKDFLISEKGFYIENGWVVEKLTATSAPEPIVKVSTLRMVGEHNQQNLLMAVATARLAGINRDAIARAIQEFPGVPHRLEHICTWEGIDFINDSKATNYDAAEVGLASVKSPAILIAGGEAKAGDDTGWLAQIQTKAAAVLLIGSAAPAFAQRLQEVGYYSYEIVETMERAVPRSAELAKEYQAPVVLLSPACASFDQYPNFEVRGDRFRELCLAWAAGGKLQHNLMLSSSL.

120–126 (GTNGKTT) provides a ligand contact to ATP.

Belongs to the MurCDEF family.

Its subcellular location is the cytoplasm. The catalysed reaction is UDP-N-acetyl-alpha-D-muramoyl-L-alanine + D-glutamate + ATP = UDP-N-acetyl-alpha-D-muramoyl-L-alanyl-D-glutamate + ADP + phosphate + H(+). The protein operates within cell wall biogenesis; peptidoglycan biosynthesis. Its function is as follows. Cell wall formation. Catalyzes the addition of glutamate to the nucleotide precursor UDP-N-acetylmuramoyl-L-alanine (UMA). This Nostoc punctiforme (strain ATCC 29133 / PCC 73102) protein is UDP-N-acetylmuramoylalanine--D-glutamate ligase.